A 194-amino-acid chain; its full sequence is tRNA (mnm(5)s(2)U34)-methyltransferase (194 aa).

Positions 33, 34, 52, 54, 79, and 80 each coordinate S-adenosyl-L-methionine.

The protein belongs to the methyltransferase superfamily. MnmM family. Homodimer.

It catalyses the reaction 5-aminomethyl-2-thiouridine(34) in tRNA + S-adenosyl-L-methionine = 5-methylaminomethyl-2-thiouridine(34) in tRNA + S-adenosyl-L-homocysteine + H(+). It participates in tRNA modification. Its function is as follows. Involved in the biosynthesis of 5-methylaminomethyl-2-thiouridine (mnm(5)s(2)U) at the wobble position (U34) in tRNA. Catalyzes the transfer of a methyl group from S-adenosyl-L-methionine to nm(5)s(2)U34 to form mnm(5)s(2)U34. This Bacillus subtilis (strain 168) protein is tRNA (mnm(5)s(2)U34)-methyltransferase.